Reading from the N-terminus, the 116-residue chain is Large ribosomal subunit protein uL18 (116 aa).

The protein belongs to the universal ribosomal protein uL18 family. In terms of assembly, part of the 50S ribosomal subunit; part of the 5S rRNA/L5/L18/L25 subcomplex. Contacts the 5S and 23S rRNAs.

This is one of the proteins that bind and probably mediate the attachment of the 5S RNA into the large ribosomal subunit, where it forms part of the central protuberance. This chain is Large ribosomal subunit protein uL18, found in Shewanella putrefaciens (strain CN-32 / ATCC BAA-453).